Reading from the N-terminus, the 200-residue chain is MTDTRREQEKDERRKLQEQSRQNEAETMRLLAFEAGRQLAEIPKEAKGNEPLLENYKSGLQETRKELETTPDATKSTNANRLERDVERAIIEAQQVREAVGREKARADEFHRHAEPGETYRGRVIGRTNSYVIQADDSRPGTIILHERAAVSGAEKVKMNDHAEISYPHGRAGIVRNPQAAQHQRQRQMEKTGAGREHGR.

Disordered stretches follow at residues 1 to 27 (MTDT…EAET), 42 to 79 (IPKE…STNA), and 169 to 200 (HGRA…EHGR). The span at 187–200 (RQMEKTGAGREHGR) shows a compositional bias: basic and acidic residues.

This is an uncharacterized protein from Shigella flexneri.